A 621-amino-acid polypeptide reads, in one-letter code: Rab proteins geranylgeranyltransferase component A 2 (621 aa).

Residues 113 to 171 form a disordered region; it reads VQDTETLQRSSPLEASATPADSLDSASLPKERQSAYSTSYEVPSRHTEESDRELSLPSA. A compositionally biased stretch (polar residues) spans 115 to 125; the sequence is DTETLQRSSPL. Over residues 155-166 the composition is skewed to basic and acidic residues; that stretch reads PSRHTEESDREL.

It belongs to the Rab GDI family. Monomer. Heterotrimer composed of RABGGTA, RABGGTB and CHML; within this trimer, RABGGTA and RABGGTB form the catalytic component B, while CHML (component A) mediates Rab protein binding. Interacts with RAB1A, RAB7A and RAB27A, but has much lower affinity for RAB1A, RAB7A and RAB27A than CHM. Interacts with the non-phosphorylated forms of RAB3A, RAB3B, RAB3C, RAB3D, RAB5B, RAB5C, RAB8A, RAB8B, RAB10, RAB12, RAB35, and RAB43.

The protein localises to the cytoplasm. It localises to the cytosol. Functionally, substrate-binding subunit (component A) of the Rab geranylgeranyltransferase (GGTase) complex. Binds unprenylated Rab proteins and presents the substrate peptide to the catalytic component B. The component A is thought to be regenerated by transferring its prenylated Rab back to the donor membrane. Less effective than CHM in supporting prenylation of Rab3 family. In Mus musculus (Mouse), this protein is Rab proteins geranylgeranyltransferase component A 2 (Chml).